Reading from the N-terminus, the 719-residue chain is Cyclin-dependent kinase 11.1 (719 aa).

Basic and acidic residues-rich tracts occupy residues 1–20, 38–48, and 78–129; these read MSDH…ESHK, KGLESKMRESI, and KAKE…DQKV. 2 disordered regions span residues 1–215 and 231–315; these read MSDH…KDDD and EEKE…EMTE. Positions 130 to 140 are enriched in basic residues; that stretch reads HEHRHHHHHRK. Basic and acidic residues predominate over residues 141–163; the sequence is HETDGHRTNRSNRDRSSERDSEK. Basic residues predominate over residues 164–174; that stretch reads HKRHIDRHKKS. Basic and acidic residues-rich tracts occupy residues 191 to 215 and 264 to 274; these read HTDV…KDDD and DDTKPKSPGKA. Over residues 275-285 the composition is skewed to acidic residues; it reads EDDDDVIEVLD. A Protein kinase domain is found at 356-647; that stretch reads YECVNRVDEG…ATQALDHEWF (292 aa). Residues 362–370 and Lys385 contribute to the ATP site; that span reads VDEGTFGVV. Catalysis depends on Asp484, which acts as the Proton acceptor. Residues 657-689 are disordered; the sequence is EEFPTFPAKSEQNKAPPPAKQKQQENRISHVDP. The segment covering 678–689 has biased composition (basic and acidic residues); that stretch reads KQQENRISHVDP.

This sequence belongs to the protein kinase superfamily. CMGC Ser/Thr protein kinase family. CDC2/CDKX subfamily. Broadly expressed in somatic and germ line cells (at protein level). Not expressed in sperm (at protein level).

It is found in the nucleus. It carries out the reaction L-seryl-[protein] + ATP = O-phospho-L-seryl-[protein] + ADP + H(+). The catalysed reaction is L-threonyl-[protein] + ATP = O-phospho-L-threonyl-[protein] + ADP + H(+). In terms of biological role, probable cyclin-dependent kinase whose activity is most likely regulated by the cyclin cyl-1/Cylin-L. Important for normal oocyte and sperm development; probably required during multiple stages of gametogenesis. Plays a role in the activation of RAS-ERK signaling in the germ line. Also acts partially redundantly with cdk-11.2 to ensure embryonic viability. The sequence is that of Cyclin-dependent kinase 11.1 from Caenorhabditis elegans.